The chain runs to 246 residues: Virulence plasmid protein pGP6-D (246 aa).

This sequence belongs to the UPF0137 (pGP6-D) family.

This chain is Virulence plasmid protein pGP6-D, found in Chlamydia psittaci (Chlamydophila psittaci).